The chain runs to 408 residues: Putative mannan endo-1,4-beta-mannosidase 4 (408 aa).

The signal sequence occupies residues 1–23 (MKCLCFIVLLAIVIAQSYVGVEA). Asparagine 73 carries N-linked (GlcNAc...) asparagine glycosylation. The substrate site is built by tryptophan 85 and asparagine 201. Glutamate 202 acts as the Proton donor in catalysis. The active-site Nucleophile is glutamate 322. Substrate is bound at residue tryptophan 364.

This sequence belongs to the glycosyl hydrolase 5 (cellulase A) family.

The protein localises to the secreted. The catalysed reaction is Random hydrolysis of (1-&gt;4)-beta-D-mannosidic linkages in mannans, galactomannans and glucomannans.. In Arabidopsis thaliana (Mouse-ear cress), this protein is Putative mannan endo-1,4-beta-mannosidase 4 (MAN4).